The chain runs to 873 residues: Zinc fingers and homeoboxes protein 1 (873 aa).

The interval 24–63 (LISDLDEGPPVLTPVENTRAESISSDEEVHESVDSDNQQN) is disordered. Thr36 carries the phosphothreonine modification. Residues Ser45, Ser47, and Ser48 each carry the phosphoserine modification. 2 consecutive C2H2-type zinc fingers follow at residues 70–93 (YECK…DSEH) and 102–125 (YVCV…LKYH). Lys159 participates in a covalent cross-link: Glycyl lysine isopeptide (Lys-Gly) (interchain with G-Cter in SUMO2). The residue at position 202 (Ser202) is a Phosphoserine. Residues 202-236 (SVEDVPEEKENEIKPDREEIVENPSSSASESNTST) form a disordered region. Basic and acidic residues predominate over residues 212 to 221 (NEIKPDREEI). Residues 223–236 (ENPSSSASESNTST) show a composition bias toward low complexity. Residues 272–432 (NSNLIPKVLI…QNNIQKSQVP (161 aa)) are required for dimerization. Residues 272–564 (NSNLIPKVLI…AQPKQSWNPF (293 aa)) are required for interaction with NFYA. A DNA-binding region (homeobox 1) is located at residues 284–346 (NSIPTYNAAL…LKHGVSWTPE (63 aa)). Residues Lys441, Lys454, Lys485, and Lys629 each participate in a glycyl lysine isopeptide (Lys-Gly) (interchain with G-Cter in SUMO2) cross-link. 2 DNA-binding regions (homeobox) span residues 464–526 (SFGI…KSNQ) and 569–630 (PQKF…EEKM). Disordered regions lie at residues 626-667 (KEEK…ICKK) and 732-770 (SSMN…NNWD). A Phosphoserine modification is found at Ser648. Positions 660 to 722 (STGKICKKTP…YAWKNGNLKW (63 aa)) form a DNA-binding region, homeobox 4. A required for nuclear localization region spans residues 734-768 (MNGLSSLRKRGRGRPKGRGRGRPRGRPRGSKRINN). Residues 740–764 (LRKRGRGRPKGRGRGRPRGRPRGSK) show a composition bias toward basic residues. Ser774 bears the Phosphoserine mark. A DNA-binding region (homeobox 5) is located at residues 777-832 (KFKTGTAILKDYYLKHKFLNEQDLDELVNKSHMGYEQVREWFAERQRRSELGIELF). The interval 829–873 (IELFEENEEEDEVIDDQEEDEEETDDSDTWEPPRHVKRKLSKSDD) is disordered. Residues 831–857 (LFEENEEEDEVIDDQEEDEEETDDSDT) are compositionally biased toward acidic residues. The tract at residues 831 to 873 (LFEENEEEDEVIDDQEEDEEETDDSDTWEPPRHVKRKLSKSDD) is required for repressor activity. Positions 863–873 (HVKRKLSKSDD) are enriched in basic residues.

The protein belongs to the ZHX family. As to quaternary structure, forms homodimers. Heterodimer (via HD1 domain) with ZHX2 (via HD1 domain). Also forms a heterodimer with ZHX3 which is a prerequisite for repressor activity. Interacts with ATF7IP and NFYA. Interacts (via homeobox domains) with DNMT3B (via PWWP domain). As to expression, ubiquitously expressed. Expressed in podocytes.

It is found in the nucleus. In terms of biological role, acts as a transcriptional repressor. Increases DNMT3B-mediated repressive transcriptional activity when DNMT3B is tethered to DNA. May link molecule between DNMT3B and other co-repressor proteins. The protein is Zinc fingers and homeoboxes protein 1 (ZHX1) of Homo sapiens (Human).